Reading from the N-terminus, the 310-residue chain is 4-hydroxyproline 2-epimerase (310 aa).

Cysteine 85 acts as the Proton acceptor in catalysis. Residues 86 to 87 (GH), histidine 205, and aspartate 231 each bind substrate. The active-site Proton donor is the cysteine 235. 236–237 (GT) contacts substrate.

The protein belongs to the proline racemase family.

The enzyme catalyses trans-4-hydroxy-L-proline = cis-4-hydroxy-D-proline. In terms of biological role, catalyzes the epimerization of trans-4-hydroxy-L-proline (t4LHyp) to cis-4-hydroxy-D-proline (c4DHyp). May be involved in a degradation pathway of t4LHyp, which would allow L.aggregata to grow on t4LHyp as a sole carbon source. Displays no proline racemase activity. The sequence is that of 4-hydroxyproline 2-epimerase from Roseibium aggregatum (strain ATCC 25650 / DSM 13394 / JCM 20685 / NBRC 16684 / NCIMB 2208 / IAM 12614 / B1) (Stappia aggregata).